The chain runs to 138 residues: Protein FAM136A (138 aa).

Position 2 is an N-acetylalanine (Ala2). Phosphothreonine occurs at positions 124 and 126.

It belongs to the FAM136 family.

The polypeptide is Protein FAM136A (Fam136a) (Mus musculus (Mouse)).